Reading from the N-terminus, the 231-residue chain is tRNA (guanine-N(1)-)-methyltransferase (231 aa).

G112 is an S-adenosyl-L-methionine binding site.

It belongs to the RNA methyltransferase TrmD family. In terms of assembly, homodimer.

Its subcellular location is the cytoplasm. It catalyses the reaction guanosine(37) in tRNA + S-adenosyl-L-methionine = N(1)-methylguanosine(37) in tRNA + S-adenosyl-L-homocysteine + H(+). Functionally, specifically methylates guanosine-37 in various tRNAs. The chain is tRNA (guanine-N(1)-)-methyltransferase from Chlorobium chlorochromatii (strain CaD3).